A 365-amino-acid polypeptide reads, in one-letter code: Sulfotransferase 2B1 (365 aa).

70–75 contributes to the 3'-phosphoadenylyl sulfate binding site; the sequence is KSGTTW. 3 residues coordinate substrate: W98, W103, and H125. H125 (proton acceptor) is an active-site residue. 3'-phosphoadenylyl sulfate-binding positions include R147, S155, Y210, 244–249, and 274–276; these read STFSAM and RKG. A disordered region spans residues 303 to 365; sequence GMPTFPWDED…ASETPHPRPS (63 aa). A compositionally biased stretch (acidic residues) spans 309-325; sequence WDEDPEEDGSPDPEPSP. S348 is subject to Phosphoserine.

It belongs to the sulfotransferase 1 family. In terms of processing, phosphorylated. As to expression, expressed in the stratum granulosum-stratum corneum junction in the skin (at protein level). Expressed highly in placenta, prostate and trachea and lower expression in the small intestine and lung.

The protein localises to the cytoplasm. It is found in the cytosol. It localises to the microsome. Its subcellular location is the nucleus. The enzyme catalyses an alcohol + 3'-phosphoadenylyl sulfate = an alkyl sulfate + adenosine 3',5'-bisphosphate + H(+). It carries out the reaction 3beta-hydroxyandrost-5-en-17-one + 3'-phosphoadenylyl sulfate = dehydroepiandrosterone 3-sulfate + adenosine 3',5'-bisphosphate + H(+). The catalysed reaction is (24S)-hydroxycholesterol + 3'-phosphoadenylyl sulfate = (24S)-hydroxycholesterol 3-sulfate + adenosine 3',5'-bisphosphate + H(+). It catalyses the reaction cholesterol + 3'-phosphoadenylyl sulfate = cholesterol sulfate + adenosine 3',5'-bisphosphate + H(+). The enzyme catalyses pregnenolone + 3'-phosphoadenylyl sulfate = pregnenolone sulfate + adenosine 3',5'-bisphosphate + H(+). In terms of biological role, sulfotransferase that utilizes 3'-phospho-5'-adenylyl sulfate (PAPS) as sulfonate donor to catalyze the sulfate conjugation. Responsible for the sulfation of cholesterol. Catalyzes sulfation of the 3beta-hydroxyl groups of steroids, such as, pregnenolone and dehydroepiandrosterone (DHEA). Preferentially sulfonates cholesterol, while it also has significant activity with pregnenolone and DHEA. Plays a role in epidermal cholesterol metabolism and in the regulation of epidermal proliferation and differentiation. Sulfonates pregnenolone but not cholesterol. This chain is Sulfotransferase 2B1 (SULT2B1), found in Homo sapiens (Human).